Reading from the N-terminus, the 334-residue chain is Protein-methionine-sulfoxide reductase catalytic subunit MsrP (334 aa).

Residues 1–44 (MKKNQFLKESDVTAESVFFMKRRQVLKALGISATALSLPHAAHA) constitute a signal peptide (tat-type signal). Residues Asn88, 91-92 (YE), Cys146, Thr181, Asn233, Arg238, and 249-251 (GIK) each bind Mo-molybdopterin.

The protein belongs to the MsrP family. As to quaternary structure, heterodimer of a catalytic subunit (MsrP) and a heme-binding subunit (MsrQ). The cofactor is Mo-molybdopterin. Predicted to be exported by the Tat system. The position of the signal peptide cleavage has not been experimentally proven.

The protein resides in the periplasm. The enzyme catalyses L-methionyl-[protein] + a quinone + H2O = L-methionyl-(S)-S-oxide-[protein] + a quinol. It carries out the reaction L-methionyl-[protein] + a quinone + H2O = L-methionyl-(R)-S-oxide-[protein] + a quinol. In terms of biological role, part of the MsrPQ system that repairs oxidized periplasmic proteins containing methionine sulfoxide residues (Met-O), using respiratory chain electrons. Thus protects these proteins from oxidative-stress damage caused by reactive species of oxygen and chlorine generated by the host defense mechanisms. MsrPQ is essential for the maintenance of envelope integrity under bleach stress, rescuing a wide series of structurally unrelated periplasmic proteins from methionine oxidation, including the primary periplasmic chaperone SurA and the lipoprotein Pal. The catalytic subunit MsrP is non-stereospecific, being able to reduce both (R-) and (S-) diastereoisomers of methionine sulfoxide. The chain is Protein-methionine-sulfoxide reductase catalytic subunit MsrP from Escherichia coli (strain K12 / MC4100 / BW2952).